Consider the following 278-residue polypeptide: Alcohol dehydrogenase-related 31 kDa protein (278 aa).

An NAD(+)-binding site is contributed by 11–34 (YVADCGGIALETSKVLMTKNIAKL). A substrate-binding site is contributed by serine 139. Tyrosine 152 functions as the Proton acceptor in the catalytic mechanism.

The protein belongs to the short-chain dehydrogenases/reductases (SDR) family.

The sequence is that of Alcohol dehydrogenase-related 31 kDa protein (Adhr) from Drosophila pseudoobscura pseudoobscura (Fruit fly).